We begin with the raw amino-acid sequence, 383 residues long: Opsin Rh3 (383 aa).

The Extracellular portion of the chain corresponds to 1–57; that stretch reads MESGNVSSSLFGNVSTALRPEARLSAETRLLGWNVPPEELRHIPEHWLTYPEPPESM. The N-linked (GlcNAc...) asparagine glycan is linked to N13. The helical transmembrane segment at 58-82 threads the bilayer; that stretch reads NYLLGTLYIFFTLMSMLGNGLVIWV. Residues 83-94 are Cytoplasmic-facing; it reads FSAAKSLRTPSN. A helical membrane pass occupies residues 95-119; that stretch reads ILVINLAFCDFMMMVKTPIFIYNSF. The Extracellular portion of the chain corresponds to 120-133; that stretch reads HQGYALGHLGCQIF. C130 and C207 are disulfide-bonded. A helical transmembrane segment spans residues 134–153; sequence GIIGSYTGIAAGATNAFIAY. At 154-171 the chain is on the cytoplasmic side; it reads DRFNVITRPMEGKMTHGK. The helical transmembrane segment at 172–196 threads the bilayer; that stretch reads AIAMIIFIYMYATPWVVACYTETWG. At 197–220 the chain is on the extracellular side; that stretch reads RFVPEGYLTSCTFDYLTDNFDTRL. The chain crosses the membrane as a helical span at residues 221–248; sequence FVACIFFFSFVCPTTMITYYYSQIVGHV. Residues 249 to 284 lie on the Cytoplasmic side of the membrane; that stretch reads FSHEKALRDQAKKMNVESLRSNVDKNKETAEIRIAK. Residues 285–308 traverse the membrane as a helical segment; that stretch reads AAITICFLFFCSWTPYGVMSLIGA. Over 309–316 the chain is Extracellular; the sequence is FGDKTLLT. Residues 317–341 form a helical membrane-spanning segment; that stretch reads PGATMIPACACKMVACIDPFVYAIS. K328 is subject to N6-(retinylidene)lysine. At 342–383 the chain is on the cytoplasmic side; the sequence is HPRYRMELQKRCPWLALNEKAPESSAVASTSTTQEPQQTTAA. The interval 362–383 is disordered; that stretch reads APESSAVASTSTTQEPQQTTAA. The span at 369–383 shows a compositional bias: low complexity; that stretch reads ASTSTTQEPQQTTAA.

The protein belongs to the G-protein coupled receptor 1 family. Opsin subfamily. Phosphorylated on some or all of the serine and threonine residues present in the C-terminal region.

It localises to the membrane. In terms of biological role, visual pigments are the light-absorbing molecules that mediate vision. They consist of an apoprotein, opsin, covalently linked to cis-retinal. The polypeptide is Opsin Rh3 (Rh3) (Drosophila melanogaster (Fruit fly)).